We begin with the raw amino-acid sequence, 321 residues long: Probable arabinan endo-1,5-alpha-L-arabinosidase C (321 aa).

An N-terminal signal peptide occupies residues 1 to 18; that stretch reads MYLYTLILLFLASANVNA. The Proton acceptor role is filled by Asp-33. Residue Asn-192 is glycosylated (N-linked (GlcNAc...) asparagine). Catalysis depends on Glu-200, which acts as the Proton donor. Asn-224 is a glycosylation site (N-linked (GlcNAc...) asparagine).

It belongs to the glycosyl hydrolase 43 family.

The protein resides in the secreted. The enzyme catalyses Endohydrolysis of (1-&gt;5)-alpha-arabinofuranosidic linkages in (1-&gt;5)-arabinans.. Its pathway is glycan metabolism; L-arabinan degradation. Functionally, endo-1,5-alpha-L-arabinanase involved in degradation of pectin. Its preferred substrate is linear 1,5-alpha-L-arabinan. The protein is Probable arabinan endo-1,5-alpha-L-arabinosidase C (abnC) of Aspergillus fumigatus (strain ATCC MYA-4609 / CBS 101355 / FGSC A1100 / Af293) (Neosartorya fumigata).